Here is a 211-residue protein sequence, read N- to C-terminus: Large ribosomal subunit protein bL25 (211 aa).

This sequence belongs to the bacterial ribosomal protein bL25 family. CTC subfamily. In terms of assembly, part of the 50S ribosomal subunit; part of the 5S rRNA/L5/L18/L25 subcomplex. Contacts the 5S rRNA. Binds to the 5S rRNA independently of L5 and L18.

In terms of biological role, this is one of the proteins that binds to the 5S RNA in the ribosome where it forms part of the central protuberance. This Methylobacterium nodulans (strain LMG 21967 / CNCM I-2342 / ORS 2060) protein is Large ribosomal subunit protein bL25.